A 474-amino-acid polypeptide reads, in one-letter code: Dihydrolipoyl dehydrogenase (474 aa).

FAD-binding positions include 36–44 (EAKDMGGTC), Lys-53, and Gly-119. A disulfide bridge connects residues Cys-44 and Cys-49. NAD(+)-binding positions include 184-188 (GSGYI), Glu-207, and 275-278 (ATGR). FAD-binding residues include Asp-323 and Ala-331. His-459 functions as the Proton acceptor in the catalytic mechanism.

It belongs to the class-I pyridine nucleotide-disulfide oxidoreductase family. Homodimer. Requires FAD as cofactor.

The protein resides in the cell inner membrane. The enzyme catalyses N(6)-[(R)-dihydrolipoyl]-L-lysyl-[protein] + NAD(+) = N(6)-[(R)-lipoyl]-L-lysyl-[protein] + NADH + H(+). In terms of biological role, lipoamide dehydrogenase is a component of the alpha-ketoacid dehydrogenase complexes. The polypeptide is Dihydrolipoyl dehydrogenase (lpdA) (Synechocystis sp. (strain ATCC 27184 / PCC 6803 / Kazusa)).